A 138-amino-acid polypeptide reads, in one-letter code: Low molecular weight protein-tyrosine-phosphatase PtpB (138 aa).

The active-site Nucleophile is cysteine 7. Arginine 13 is an active-site residue. Aspartate 111 (proton donor) is an active-site residue.

It belongs to the low molecular weight phosphotyrosine protein phosphatase family.

The catalysed reaction is O-phospho-L-tyrosyl-[protein] + H2O = L-tyrosyl-[protein] + phosphate. Dephosphorylates the phosphotyrosine-containing proteins. This chain is Low molecular weight protein-tyrosine-phosphatase PtpB (ptpB), found in Staphylococcus haemolyticus (strain JCSC1435).